A 274-amino-acid chain; its full sequence is Subtilisin DY (274 aa).

Gln2 is a binding site for Ca(2+). Residues 5–273 (PYGIPLIKAD…KGLINVEAAA (269 aa)) form the Peptidase S8 domain. The Charge relay system role is filled by Asp32. Ca(2+) is bound at residue Asp41. The active-site Charge relay system is His63. The Ca(2+) site is built by Leu74, Asn76, Val80, Ala168, Tyr170, and Val173. Ser220 acts as the Charge relay system in catalysis.

This sequence belongs to the peptidase S8 family. Ca(2+) serves as cofactor.

It is found in the secreted. The catalysed reaction is Hydrolysis of proteins with broad specificity for peptide bonds, and a preference for a large uncharged residue in P1. Hydrolyzes peptide amides.. Functionally, subtilisin is an extracellular alkaline serine protease, it catalyzes the hydrolysis of proteins and peptide amides. The chain is Subtilisin DY (apr) from Bacillus licheniformis.